The chain runs to 399 residues: Nitric oxide reductase (399 aa).

The tract at residues 32–221 is zinc metallo-hydrolase; that stretch reads HRGTTYNAYL…DEIQKINLAI (190 aa). 6 residues coordinate Fe cation: His81, Glu83, Asp85, His148, Asp167, and His228. One can recognise a Flavodoxin-like domain in the interval 255–394; it reads AVIAYDTMWL…RCYELGRKIA (140 aa).

It in the N-terminal section; belongs to the zinc metallo-hydrolase group 3 family. Homodimer. Requires FMN as cofactor. The cofactor is Fe cation.

Has nitric oxide reductase activity in combination with Hrb; probably involved in nitrosative stress protection. The chain is Nitric oxide reductase (fprA) from Moorella thermoacetica (strain ATCC 39073 / JCM 9320).